The primary structure comprises 431 residues: MQMFCYQCSQTANGTGCTEYGVCGKSPTVARLQDNLVFAIKGISAYYYHARELGYDDPEIAGFLDEALYSTLTNVNFDAQSFVEYALEAGRMNLKAMQLLKKAHIETYGEPTPVEVETGTKKGKGIIVTGHNLKALEELLKQVEGTNVYVYTHSEMLPAHGYPGLRKYKNLIGNLGKAWYDQRKLFAEYPVAILGTSNCVLIPSESYRDRMFTTSIARLPGVKHIDGYDYTEVIEKAKSLPDLEEKPGSYKLRTGFSTSVVVSLADKIKELVEAGKIKHFLVVGGCDVPFKRNEYYREFVQKLPKETVVITLACGKFRINDLDLGDIDGIPRLIDVGQCNDTIVAIEIAQALAKVFGVEVTELPLTLVLTWMEQKAVAILWTLLALGLKNIYVGPVLPAWVNEDILKVLTAEFGLKTISEPEKDIKEILKV.

4 residues coordinate [4Fe-4S] cluster: C5, C8, C17, and C23. The hybrid [4Fe-2O-2S] cluster site is built by H131, E155, C199, C286, C314, C339, E373, and K375. C286 bears the Cysteine persulfide mark.

The protein belongs to the HCP family. Requires [4Fe-4S] cluster as cofactor. It depends on hybrid [4Fe-2O-2S] cluster as a cofactor.

The protein localises to the cytoplasm. It catalyses the reaction A + NH4(+) + H2O = hydroxylamine + AH2 + H(+). In terms of biological role, catalyzes the reduction of hydroxylamine to form NH(3) and H(2)O. This Thermotoga maritima (strain ATCC 43589 / DSM 3109 / JCM 10099 / NBRC 100826 / MSB8) protein is Hydroxylamine reductase.